The sequence spans 359 residues: Archaemetzincin-2 (359 aa).

His254 contacts Zn(2+). The active-site Proton acceptor is Glu255. Positions 258, 264, 265, 270, 289, and 292 each coordinate Zn(2+).

It belongs to the peptidase M54 family. The cofactor is Zn(2+).

Functionally, probable zinc metalloprotease. The sequence is that of Archaemetzincin-2 (Amz2) from Rattus norvegicus (Rat).